A 641-amino-acid chain; its full sequence is 1-deoxy-D-xylulose-5-phosphate synthase (641 aa).

Residues H71 and 112 to 114 each bind thiamine diphosphate; that span reads SHA. Position 144 (D144) interacts with Mg(2+). Residues 145–146, N173, Y284, and E365 contribute to the thiamine diphosphate site; that span reads GA. N173 contributes to the Mg(2+) binding site.

It belongs to the transketolase family. DXPS subfamily. As to quaternary structure, homodimer. It depends on Mg(2+) as a cofactor. Thiamine diphosphate serves as cofactor.

It carries out the reaction D-glyceraldehyde 3-phosphate + pyruvate + H(+) = 1-deoxy-D-xylulose 5-phosphate + CO2. It participates in metabolic intermediate biosynthesis; 1-deoxy-D-xylulose 5-phosphate biosynthesis; 1-deoxy-D-xylulose 5-phosphate from D-glyceraldehyde 3-phosphate and pyruvate: step 1/1. Functionally, catalyzes the acyloin condensation reaction between C atoms 2 and 3 of pyruvate and glyceraldehyde 3-phosphate to yield 1-deoxy-D-xylulose-5-phosphate (DXP). This Mycobacterium avium (strain 104) protein is 1-deoxy-D-xylulose-5-phosphate synthase.